The chain runs to 146 residues: Peptide methionine sulfoxide reductase MsrB (146 aa).

In terms of domain architecture, MsrB spans 6–129 (SAEAIAKLSA…NSASLRFVPK (124 aa)). Cys-118 functions as the Nucleophile in the catalytic mechanism.

The protein belongs to the MsrB Met sulfoxide reductase family.

It carries out the reaction L-methionyl-[protein] + [thioredoxin]-disulfide + H2O = L-methionyl-(R)-S-oxide-[protein] + [thioredoxin]-dithiol. This chain is Peptide methionine sulfoxide reductase MsrB, found in Brucella melitensis biotype 1 (strain ATCC 23456 / CCUG 17765 / NCTC 10094 / 16M).